The following is a 570-amino-acid chain: Spermatocyte protein spe-26 (570 aa).

Kelch repeat units lie at residues 244 to 291 (VLII…IVDG), 293 to 338 (LYLF…SVVY), 341 to 393 (RIYV…VFEN), 395 to 440 (IYVS…NHGN), 442 to 487 (LLIV…SYKG), and 489 to 535 (LFSV…VAPN).

In terms of tissue distribution, testis, in both spermatogonial cells and spermatocytes.

It localises to the cytoplasm. It is found in the cytoskeleton. May play a role in the spermatocyte cytoskeleton, possibly interacting with actin. This chain is Spermatocyte protein spe-26 (spe-26), found in Caenorhabditis elegans.